The sequence spans 144 residues: Putative low molecular weight protein-tyrosine-phosphatase (144 aa).

Catalysis depends on Cys-9, which acts as the Nucleophile. The active site involves Arg-15. Residue Asp-115 is the Proton donor of the active site.

The protein belongs to the low molecular weight phosphotyrosine protein phosphatase family.

It catalyses the reaction O-phospho-L-tyrosyl-[protein] + H2O = L-tyrosyl-[protein] + phosphate. This Klebsiella pneumoniae protein is Putative low molecular weight protein-tyrosine-phosphatase.